We begin with the raw amino-acid sequence, 255 residues long: MKLIPAIDLMNGKCVRLFKGDFNKKKDFSREPYEQAKYWENEGAKCIHIVDLDAAKTGIPTNDQSIQKIVKSVNIPIQIGGGIRSLERIKQLFSYGVDKVIMGTSAIENKELVKSLSTKFPSRIIIGIDAKEGKVSTRGWLKQSDVLATELVQEFSSFKIASFIVTDINTDGTLEGTNEVFIKKILEITDIPVIASGGVGSISDLLSLTKFEDSGLYGVIVGKALYENKFTISEASNILSTERINDIPINKDYYA.

The active-site Proton acceptor is aspartate 8. Catalysis depends on aspartate 129, which acts as the Proton donor.

The protein belongs to the HisA/HisF family.

It localises to the cytoplasm. It catalyses the reaction 1-(5-phospho-beta-D-ribosyl)-5-[(5-phospho-beta-D-ribosylamino)methylideneamino]imidazole-4-carboxamide = 5-[(5-phospho-1-deoxy-D-ribulos-1-ylimino)methylamino]-1-(5-phospho-beta-D-ribosyl)imidazole-4-carboxamide. The protein operates within amino-acid biosynthesis; L-histidine biosynthesis; L-histidine from 5-phospho-alpha-D-ribose 1-diphosphate: step 4/9. This chain is 1-(5-phosphoribosyl)-5-[(5-phosphoribosylamino)methylideneamino] imidazole-4-carboxamide isomerase, found in Prochlorococcus marinus subsp. pastoris (strain CCMP1986 / NIES-2087 / MED4).